Consider the following 426-residue polypeptide: Enolase (426 aa).

Residue Q163 coordinates (2R)-2-phosphoglycerate. The active-site Proton donor is E205. Residues D242, E283, and D310 each coordinate Mg(2+). Positions 335, 364, 365, and 386 each coordinate (2R)-2-phosphoglycerate. K335 acts as the Proton acceptor in catalysis.

Belongs to the enolase family. It depends on Mg(2+) as a cofactor.

Its subcellular location is the cytoplasm. It localises to the secreted. It is found in the cell surface. The catalysed reaction is (2R)-2-phosphoglycerate = phosphoenolpyruvate + H2O. The protein operates within carbohydrate degradation; glycolysis; pyruvate from D-glyceraldehyde 3-phosphate: step 4/5. Its function is as follows. Catalyzes the reversible conversion of 2-phosphoglycerate (2-PG) into phosphoenolpyruvate (PEP). It is essential for the degradation of carbohydrates via glycolysis. This is Enolase from Aquifex aeolicus (strain VF5).